Consider the following 370-residue polypeptide: Alpha-(1,3)-fucosyltransferase 7 (370 aa).

Over 1–36 (MVQGCLCWRGCCDLKTSFPWVTNSRRLWMNCIGCNP) the chain is Cytoplasmic. A helical; Signal-anchor for type II membrane protein transmembrane segment spans residues 37-59 (VWRLRAWGCLAGGTTLMVIWLFW). Topologically, residues 60-370 (LLRSVPGGAP…YEDLESWFQA (311 aa)) are lumenal. Asn-86 carries N-linked (GlcNAc...) asparagine glycosylation. Cys-96 and Cys-104 form a disulfide bridge. An N-linked (GlcNAc...) asparagine glycan is attached at Asn-109. Cys-239 and Cys-242 are joined by a disulfide. A glycan (N-linked (GlcNAc...) asparagine) is linked at Asn-319. Cys-346 and Cys-349 are oxidised to a cystine.

Belongs to the glycosyltransferase 10 family. In terms of processing, N-glycosylated. In terms of tissue distribution, expressed in lymph node and kidney.

The protein localises to the golgi apparatus. It localises to the golgi stack membrane. The catalysed reaction is an N-acetyl-alpha-neuraminyl-(2-&gt;3)-beta-D-galactosyl-(1-&gt;4)-N-acetyl-beta-D-glucosaminyl derivative + GDP-beta-L-fucose = an alpha-Neu5Ac-(2-&gt;3)-beta-D-Gal-(1-&gt;4)-[alpha-L-Fuc-(1-&gt;3)]-beta-D-GlcNAc derivative + GDP + H(+). It carries out the reaction a neolactoside IV(3)-alpha-NeuAc-nLc4Cer + GDP-beta-L-fucose = a neolactoside IV(3)-alpha-NeuNAc,III(3)-alpha-Fuc-nLc4Cer + GDP + H(+). It catalyses the reaction a neolactoside VI(3)-alpha-NeuNAc-nLc6Cer + GDP-beta-L-fucose = a neolactoside VI(3)-alpha-NeuAc,V(3)-alphaFuc-nLc6Cer + GDP + H(+). The enzyme catalyses an alpha-Neu5Ac-(2-&gt;3)-beta-D-Gal-(1-&gt;4)-beta-D-GlcNAc-(1-&gt;3)-beta-D-Gal-(1-&gt;4)-[alpha-L-Fuc-(1-&gt;3)]-beta-D-GlcNAc derivative + GDP-beta-L-fucose = an alpha-Neu5Ac-(2-&gt;3)-beta-D-Gal-(1-&gt;4)-[alpha-L-Fuc-(1-&gt;3)]-beta-D-GlcNAc-(1-&gt;3)-beta-D-Gal-(1-&gt;4)-[alpha-L-Fuc-(1-&gt;3)]-beta-D-GlcNAc derivative + GDP + H(+). The catalysed reaction is an alpha-Neu5Ac-(2-&gt;3)-beta-D-Gal-(1-&gt;4)-beta-D-GlcNAc6S derivative + GDP-beta-L-fucose = an alpha-Neu5Ac-(2-&gt;3)-beta-D-Gal-(1-&gt;4)-[alpha-L-Fuc-(1-&gt;3)]-beta-D-GlcNAc6S derivative + GDP + H(+). It carries out the reaction alpha-Neu5Ac-(2-&gt;3)-beta-D-Gal-(1-&gt;4)-beta-D-GlcNAc-(1-&gt;3)-beta-D-Gal-(1-&gt;4)-D-Glc + GDP-beta-L-fucose = alpha-Neu5Ac-(2-&gt;3)-beta-D-Gal-(1-&gt;4)-[alpha-L-Fuc-(1-&gt;3)]-beta-D-GlcNAc-(1-&gt;3)-beta-D-Gal-(1-&gt;4)-D-Glc + GDP + H(+). It catalyses the reaction alpha-Neu5Ac-(2-&gt;3)-beta-D-Gal-(1-&gt;4)-beta-D-GlcNAc-(1-&gt;3)-beta-D-Gal-(1-&gt;4)-[alpha-L-Fuc-(1-&gt;3)]-beta-D-GlcNAc-(1-&gt;3)-beta-D-Gal-(1-&gt;4)-beta-D-GlcNAc + GDP-beta-L-fucose = alpha-Neu5Ac-(2-&gt;3)-beta-D-Gal-(1-&gt;4)-[alpha-L-Fuc-(1-&gt;3)]-beta-D-GlcNAc-(1-&gt;3)-beta-D-Gal-(1-&gt;4)-[alpha-L-Fuc-(1-&gt;3)]-beta-D-GlcNAc-(1-&gt;3)-beta-D-Gal-(1-&gt;4)-beta-D-GlcNAc + GDP + H(+). The enzyme catalyses alpha-Neu5Ac-(2-&gt;3)-beta-D-Gal-(1-&gt;4)-beta-D-GlcNAc-(1-&gt;3)-beta-D-Gal-(1-&gt;4)-beta-D-GlcNAc-(1-&gt;3)-beta-D-Gal-(1-&gt;4)-beta-D-GlcNAc + GDP-beta-L-fucose = alpha-Neu5Ac-(2-&gt;3)-beta-D-Gal-(1-&gt;4)-[alpha-L-Fuc-(1-&gt;3)]-beta-D-GlcNAc-(1-&gt;3)-beta-D-Gal-(1-&gt;4)-beta-D-GlcNAc-(1-&gt;3)-beta-D-Gal-(1-&gt;4)-beta-D-GlcNAc + GDP + H(+). Its pathway is protein modification; protein glycosylation. Inhibited by NaCl. Inhibited by GDP in a concentration dependent manner, with an IC(50) value of 93 uM. Also inhibited by GMP and GTP. Inhibited by N-ethylmaleimide. Activated by poly(ethylene glycol) by enhancing the thermal stability of FUT7. Activated by Mn2+, Ca2+, and Mg2+. Both panosialin A and B inhibit activity with IC(50) values of 4.8 and 5.3 ug/ml, respectively. Inhibited by gallic acid (GA) and (-)-epigallocatechin gallate (EGCG) in a time-dependent and irreversible manner with IC(50) values of 60 and 700 nM, respectively. Functionally, catalyzes the transfer of L-fucose, from a guanosine diphosphate-beta-L-fucose, to the N-acetyl glucosamine (GlcNAc) of a distal alpha2,3 sialylated lactosamine unit of a glycoprotein or a glycolipid-linked sialopolylactosamines chain through an alpha-1,3 glycosidic linkage and participates in the final fucosylation step in the biosynthesis of the sialyl Lewis X (sLe(x)), a carbohydrate involved in cell and matrix adhesion during leukocyte trafficking and fertilization. In vitro, also synthesizes sialyl-dimeric-Lex structures, from VIM-2 structures and both di-fucosylated and trifucosylated structures from mono-fucosylated precursors. However does not catalyze alpha 1-3 fucosylation when an internal alpha 1-3 fucosylation is present in polylactosamine chain and the fucosylation rate of the internal GlcNAc residues is reduced once fucose has been added to the distal GlcNAc. Also catalyzes the transfer of a fucose from GDP-beta-fucose to the 6-sulfated a(2,3)sialylated substrate to produce 6-sulfo sLex mediating significant L-selectin-dependent cell adhesion. Through sialyl-Lewis(x) biosynthesis, can control SELE- and SELP-mediated cell adhesion with leukocytes and allows leukocytes tethering and rolling along the endothelial tissue thereby enabling the leukocytes to accumulate at a site of inflammation. May enhance embryo implantation through sialyl Lewis X (sLeX)-mediated adhesion of embryo cells to endometrium. May affect insulin signaling by up-regulating the phosphorylation and expression of some signaling molecules involved in the insulin-signaling pathway through SLe(x) which is present on the glycans of the INSRR alpha subunit. The chain is Alpha-(1,3)-fucosyltransferase 7 from Rattus norvegicus (Rat).